The following is a 214-amino-acid chain: Ribosomal RNA small subunit methyltransferase G (214 aa).

Residues Gly-77, Leu-82, 128 to 129 (VE), and Arg-143 contribute to the S-adenosyl-L-methionine site.

The protein belongs to the methyltransferase superfamily. RNA methyltransferase RsmG family.

The protein resides in the cytoplasm. It catalyses the reaction guanosine(527) in 16S rRNA + S-adenosyl-L-methionine = N(7)-methylguanosine(527) in 16S rRNA + S-adenosyl-L-homocysteine. Specifically methylates the N7 position of guanine in position 527 of 16S rRNA. The polypeptide is Ribosomal RNA small subunit methyltransferase G (Nitrosomonas eutropha (strain DSM 101675 / C91 / Nm57)).